The primary structure comprises 60 residues: Large ribosomal subunit protein bL32 (60 aa).

The tract at residues 1-21 is disordered; it reads MAVPRNRHSNARKNIRRSHDA.

It belongs to the bacterial ribosomal protein bL32 family.

The chain is Large ribosomal subunit protein bL32 from Chlamydia felis (strain Fe/C-56) (Chlamydophila felis).